A 233-amino-acid chain; its full sequence is Large ribosomal subunit protein uL1 (233 aa).

The protein belongs to the universal ribosomal protein uL1 family. Part of the 50S ribosomal subunit.

In terms of biological role, binds directly to 23S rRNA. The L1 stalk is quite mobile in the ribosome, and is involved in E site tRNA release. Its function is as follows. Protein L1 is also a translational repressor protein, it controls the translation of the L11 operon by binding to its mRNA. This is Large ribosomal subunit protein uL1 from Psychrobacter arcticus (strain DSM 17307 / VKM B-2377 / 273-4).